Here is a 373-residue protein sequence, read N- to C-terminus: MTDNSKIRVVVGMSGGVDSSVTALLLKEQGYDVIGVFMKNWDDTDEFGVCTATEDYKDVAAVADQIGIPYYSVNFEKEYWDRVFEYFLAEYRAGRTPNPDVMCNKEIKFKAFLGYAMTLGADYVATGHYAQVKRDENGTVHMLRGADNGKDQTYFLSQLSQEQLQKTLFPLGHLQKSEVREIAERAGLATAKKKDSTGICFIGEKNFKQFLSQYLPAQKGRMMTIDGRDMGEHAGLMYYTIGQRGGLGIGGQHGGDNQPWFVVGKDLSQNILYVGQGFYHEALMSNSLDASVIHFTREMPEEFTFECTAKFRYRQPDSQVTVHVRGDKAEVVFAEPQRAITPGQAVVFYDGKECLGGGMIDMAYKNGQPCQYI.

ATP is bound by residues 12 to 19 (GMSGGVDS) and methionine 38. An interaction with target base in tRNA region spans residues 98 to 100 (NPD). Cysteine 103 serves as the catalytic Nucleophile. Cysteine 103 and cysteine 200 are disulfide-bonded. Glycine 127 contributes to the ATP binding site. The interaction with tRNA stretch occupies residues 150–152 (KDQ). Catalysis depends on cysteine 200, which acts as the Cysteine persulfide intermediate. Residues 312 to 313 (RY) form an interaction with tRNA region.

The protein belongs to the MnmA/TRMU family.

The protein resides in the cytoplasm. It carries out the reaction S-sulfanyl-L-cysteinyl-[protein] + uridine(34) in tRNA + AH2 + ATP = 2-thiouridine(34) in tRNA + L-cysteinyl-[protein] + A + AMP + diphosphate + H(+). Catalyzes the 2-thiolation of uridine at the wobble position (U34) of tRNA, leading to the formation of s(2)U34. In Streptococcus pyogenes serotype M18 (strain MGAS8232), this protein is tRNA-specific 2-thiouridylase MnmA.